The primary structure comprises 580 residues: Serine/threonine-protein kinase srk1 (580 aa).

A compositionally biased stretch (polar residues) spans 51–61 (VADSTQNPTSK). The tract at residues 51–91 (VADSTQNPTSKPKSRHAHFHETVHENPSEYSRSKCKQPTNE) is disordered. Residues 124–421 (YTLLQKMGDG…IHQFLAHPWI (298 aa)) enclose the Protein kinase domain. Residues 130-138 (MGDGAFSNV) and Lys153 each bind ATP. Asp257 serves as the catalytic Proton acceptor. The interval 530-580 (NLSGENDPSLASRQPAQSQQQSSQRSRNKFKGFQLNLSKATLYNRRHRQKV) is disordered. The segment covering 537 to 554 (PSLASRQPAQSQQQSSQR) has biased composition (low complexity).

Belongs to the protein kinase superfamily. CAMK Ser/Thr protein kinase family. CaMK subfamily. The cofactor is Mg(2+). Post-translationally, phosphorylated by sty1.

Its subcellular location is the cytoplasm. It is found in the nucleus. The protein localises to the nucleolus. The protein resides in the spore core. It catalyses the reaction L-seryl-[protein] + ATP = O-phospho-L-seryl-[protein] + ADP + H(+). It carries out the reaction L-threonyl-[protein] + ATP = O-phospho-L-threonyl-[protein] + ADP + H(+). In terms of biological role, delays the mitotic G2/M transition by promoting nuclear exclusion of cdc25. During osmotic stress, inhibits the G2/M transition in a sty1 stress-activated MAPK pathway-dependent manner. The sequence is that of Serine/threonine-protein kinase srk1 from Schizosaccharomyces pombe (strain 972 / ATCC 24843) (Fission yeast).